The primary structure comprises 339 residues: Nicotinate-nucleotide--dimethylbenzimidazole phosphoribosyltransferase (339 aa).

The active-site Proton acceptor is the glutamate 306.

It belongs to the CobT family.

The enzyme catalyses 5,6-dimethylbenzimidazole + nicotinate beta-D-ribonucleotide = alpha-ribazole 5'-phosphate + nicotinate + H(+). It participates in nucleoside biosynthesis; alpha-ribazole biosynthesis; alpha-ribazole from 5,6-dimethylbenzimidazole: step 1/2. In terms of biological role, catalyzes the synthesis of alpha-ribazole-5'-phosphate from nicotinate mononucleotide (NAMN) and 5,6-dimethylbenzimidazole (DMB). The chain is Nicotinate-nucleotide--dimethylbenzimidazole phosphoribosyltransferase from Brucella melitensis biotype 2 (strain ATCC 23457).